A 388-amino-acid polypeptide reads, in one-letter code: Succinate--CoA ligase [ADP-forming] subunit beta (388 aa).

The ATP-grasp domain occupies 9–244 (KQLFARYGLP…QSQEDPREAQ (236 aa)). ATP contacts are provided by residues Lys46, 53–55 (GRG), Glu99, Thr102, and Glu107. Mg(2+) contacts are provided by Asn199 and Asp213. Substrate contacts are provided by residues Asn264 and 321 to 323 (GIV).

It belongs to the succinate/malate CoA ligase beta subunit family. Heterotetramer of two alpha and two beta subunits. Mg(2+) is required as a cofactor.

The enzyme catalyses succinate + ATP + CoA = succinyl-CoA + ADP + phosphate. The catalysed reaction is GTP + succinate + CoA = succinyl-CoA + GDP + phosphate. It functions in the pathway carbohydrate metabolism; tricarboxylic acid cycle; succinate from succinyl-CoA (ligase route): step 1/1. Its function is as follows. Succinyl-CoA synthetase functions in the citric acid cycle (TCA), coupling the hydrolysis of succinyl-CoA to the synthesis of either ATP or GTP and thus represents the only step of substrate-level phosphorylation in the TCA. The beta subunit provides nucleotide specificity of the enzyme and binds the substrate succinate, while the binding sites for coenzyme A and phosphate are found in the alpha subunit. This chain is Succinate--CoA ligase [ADP-forming] subunit beta, found in Shigella boydii serotype 18 (strain CDC 3083-94 / BS512).